A 283-amino-acid polypeptide reads, in one-letter code: Quinate/shikimate dehydrogenase (NAD(+)) (283 aa).

S17, T69, K73, N94, and D110 together coordinate shikimate. L-quinate is bound by residues 17–19, T69, K73, N94, and D110; that span reads SRT. K73 (proton acceptor) is an active-site residue. NAD(+) contacts are provided by residues 137–138, D158, R163, 203–206, A213, V228, and G251; these read GV and PMGM. Shikimate is bound at residue Q258. Q258 provides a ligand contact to L-quinate.

This sequence belongs to the shikimate dehydrogenase family. As to quaternary structure, homodimer.

It carries out the reaction L-quinate + NAD(+) = 3-dehydroquinate + NADH + H(+). The catalysed reaction is shikimate + NAD(+) = 3-dehydroshikimate + NADH + H(+). Its pathway is metabolic intermediate biosynthesis; chorismate biosynthesis; chorismate from D-erythrose 4-phosphate and phosphoenolpyruvate: step 4/7. It participates in aromatic compound metabolism; 3,4-dihydroxybenzoate biosynthesis; 3-dehydroquinate from D-quinate (NAD(+) route). Its function is as follows. Involved in the biosynthesis of the chorismate, which leads to the biosynthesis of aromatic amino acids, and plays a key role in the quinate degradation pathway. Catalyzes the NAD(+)-dependent oxidation of both quinate and shikimate to 3-dehydroquinate and 3-dehydroshikimate, respectively. It can only use NAD. This Corynebacterium glutamicum (strain ATCC 13032 / DSM 20300 / JCM 1318 / BCRC 11384 / CCUG 27702 / LMG 3730 / NBRC 12168 / NCIMB 10025 / NRRL B-2784 / 534) protein is Quinate/shikimate dehydrogenase (NAD(+)).